A 177-amino-acid polypeptide reads, in one-letter code: 3-hydroxydecanoyl-[acyl-carrier-protein] dehydratase (177 aa).

The active site involves histidine 76.

It belongs to the thioester dehydratase family. FabA subfamily. In terms of assembly, homodimer.

Its subcellular location is the cytoplasm. It catalyses the reaction a (3R)-hydroxyacyl-[ACP] = a (2E)-enoyl-[ACP] + H2O. The enzyme catalyses (3R)-hydroxydecanoyl-[ACP] = (2E)-decenoyl-[ACP] + H2O. The catalysed reaction is (2E)-decenoyl-[ACP] = (3Z)-decenoyl-[ACP]. Its pathway is lipid metabolism; fatty acid biosynthesis. Necessary for the introduction of cis unsaturation into fatty acids. Catalyzes the dehydration of (3R)-3-hydroxydecanoyl-ACP to E-(2)-decenoyl-ACP and then its isomerization to Z-(3)-decenoyl-ACP. Can catalyze the dehydratase reaction for beta-hydroxyacyl-ACPs with saturated chain lengths up to 16:0, being most active on intermediate chain length. This chain is 3-hydroxydecanoyl-[acyl-carrier-protein] dehydratase, found in Haemophilus influenzae (strain PittGG).